We begin with the raw amino-acid sequence, 31 residues long: Photosystem II reaction center protein T (31 aa).

The chain crosses the membrane as a helical span at residues alanine 3–phenylalanine 23.

This sequence belongs to the PsbT family. PSII is composed of 1 copy each of membrane proteins PsbA, PsbB, PsbC, PsbD, PsbE, PsbF, PsbH, PsbI, PsbJ, PsbK, PsbL, PsbM, PsbT, PsbX, PsbY, PsbZ, Psb30/Ycf12, at least 3 peripheral proteins of the oxygen-evolving complex and a large number of cofactors. It forms dimeric complexes.

Its subcellular location is the plastid. It localises to the cyanelle thylakoid membrane. Functionally, found at the monomer-monomer interface of the photosystem II (PS II) dimer, plays a role in assembly and dimerization of PSII. PSII is a light-driven water plastoquinone oxidoreductase, using light energy to abstract electrons from H(2)O, generating a proton gradient subsequently used for ATP formation. The polypeptide is Photosystem II reaction center protein T (Cyanophora paradoxa).